A 303-amino-acid polypeptide reads, in one-letter code: ATP synthase gamma chain (303 aa).

This sequence belongs to the ATPase gamma chain family. F-type ATPases have 2 components, CF(1) - the catalytic core - and CF(0) - the membrane proton channel. CF(1) has five subunits: alpha(3), beta(3), gamma(1), delta(1), epsilon(1). CF(0) has three main subunits: a, b and c.

The protein resides in the cell inner membrane. Functionally, produces ATP from ADP in the presence of a proton gradient across the membrane. The gamma chain is believed to be important in regulating ATPase activity and the flow of protons through the CF(0) complex. The sequence is that of ATP synthase gamma chain from Bartonella henselae (strain ATCC 49882 / DSM 28221 / CCUG 30454 / Houston 1) (Rochalimaea henselae).